The primary structure comprises 343 residues: MALPRITSPHAKGSNRTQQVMLQVLLATVPGILALTWLFGAGTLYNLALASLFALAFEAAILAARQRPLAFFLKDYSALVTAVLLALALPPYAPWWLTLIACGFAIVFGKQLYGGLGQNPFNPAMLGYVVVLISFPVEMTSWPAPHGVAALDGIKHILGIASLPDGWAQATALDALKVNKSLTIDELRAANPAFGHFGGAGSEAVNLAFLAGGLYLLHKRLITWHAPVGMLAALFVMSLLFWNGSGSDSNGSPLFHLLTGATMLGAFFIVTDPVSGATSNRGRLVFGIGVGVLVYVIRAWGGYPDAVAFAVLLMNLAAPTIDYYTRPRSYGHRKPNSGFKLGE.

The next 4 membrane-spanning stretches (helical) occupy residues 24–44 (VLLA…AGTL), 45–65 (YNLA…LAAR), 69–91 (LAFF…ALPP), and 124–144 (AMLG…SWPA). At threonine 171 the chain carries FMN phosphoryl threonine. 5 helical membrane passes run 197 to 217 (FGGA…LYLL), 221 to 241 (LITW…SLLF), 251 to 271 (GSPL…FIVT), 284 to 304 (LVFG…GGYP), and 305 to 325 (DAVA…DYYT).

The protein belongs to the NqrB/RnfD family. In terms of assembly, the complex is composed of six subunits: RnfA, RnfB, RnfC, RnfD, RnfE and RnfG. The cofactor is FMN.

The protein localises to the cell inner membrane. Part of a membrane-bound complex that couples electron transfer with translocation of ions across the membrane. The sequence is that of Ion-translocating oxidoreductase complex subunit D from Ectopseudomonas mendocina (strain ymp) (Pseudomonas mendocina).